Reading from the N-terminus, the 124-residue chain is Hydrogenase maturation factor HypA (124 aa).

A Ni(2+)-binding site is contributed by histidine 2. Zn(2+) contacts are provided by cysteine 78, cysteine 81, cysteine 97, and cysteine 100.

This sequence belongs to the HypA/HybF family.

In terms of biological role, involved in the maturation of [NiFe] hydrogenases. Required for nickel insertion into the metal center of the hydrogenase. The chain is Hydrogenase maturation factor HypA from Methanococcus vannielii (strain ATCC 35089 / DSM 1224 / JCM 13029 / OCM 148 / SB).